Reading from the N-terminus, the 763-residue chain is Autophagy-related protein 18f (763 aa).

WD repeat units lie at residues 345 to 385 (AHKS…STSR) and 402 to 441 (FTNA…EGDA). Positions 701–711 (NESIQSPSTTT) are enriched in polar residues. Residues 701-763 (NESIQSPSTT…SEDEDEEQVD (63 aa)) are disordered. Composition is skewed to basic and acidic residues over residues 712-725 (QDDK…HGTE) and 741-754 (PVDK…KNHS).

This sequence belongs to the WD repeat PROPPIN family. As to quaternary structure, component of the PI(3,5)P2 regulatory complex at least composed of ATG18, SAC/FIG4, FAB1 and VAC14. Expressed in roots, flowers and leaves.

The protein localises to the preautophagosomal structure membrane. It localises to the vacuole membrane. Functionally, the PI(3,5)P2 regulatory complex regulates both the synthesis and turnover of phosphatidylinositol 3,5-bisphosphate (PtdIns(3,5)P2). Required for autophagy. In Arabidopsis thaliana (Mouse-ear cress), this protein is Autophagy-related protein 18f (ATG18F).